A 1212-amino-acid chain; its full sequence is DNA-directed RNA polymerase subunit beta' (1212 aa).

Positions 60, 62, 75, and 78 each coordinate Zn(2+). Residues Asp450, Asp452, and Asp454 each contribute to the Mg(2+) site. The Zn(2+) site is built by Cys819, Cys893, Cys900, and Cys903.

This sequence belongs to the RNA polymerase beta' chain family. The RNAP catalytic core consists of 2 alpha, 1 beta, 1 beta' and 1 omega subunit. When a sigma factor is associated with the core the holoenzyme is formed, which can initiate transcription. Mg(2+) serves as cofactor. It depends on Zn(2+) as a cofactor.

It carries out the reaction RNA(n) + a ribonucleoside 5'-triphosphate = RNA(n+1) + diphosphate. In terms of biological role, DNA-dependent RNA polymerase catalyzes the transcription of DNA into RNA using the four ribonucleoside triphosphates as substrates. The sequence is that of DNA-directed RNA polymerase subunit beta' from Streptococcus thermophilus (strain ATCC BAA-491 / LMD-9).